Reading from the N-terminus, the 33-residue chain is Photosystem II reaction center protein Psb30 (33 aa).

A helical membrane pass occupies residues 5–25 (VVAQLTVLALIVVSGPLVIGL).

Belongs to the Psb30/Ycf12 family. PSII is composed of 1 copy each of membrane proteins PsbA, PsbB, PsbC, PsbD, PsbE, PsbF, PsbH, PsbI, PsbJ, PsbK, PsbL, PsbM, PsbT, PsbX, PsbY, PsbZ, Psb30/Ycf12, peripheral proteins of the oxygen-evolving complex and a large number of cofactors. It forms dimeric complexes.

The protein resides in the plastid. It localises to the chloroplast thylakoid membrane. In terms of biological role, a core subunit of photosystem II (PSII), probably helps stabilize the reaction center. This chain is Photosystem II reaction center protein Psb30, found in Zygnema circumcarinatum (Green alga).